The sequence spans 152 residues: Endoribonuclease YbeY (152 aa).

Zn(2+) contacts are provided by H113, H117, and H123.

This sequence belongs to the endoribonuclease YbeY family. The cofactor is Zn(2+).

It localises to the cytoplasm. Single strand-specific metallo-endoribonuclease involved in late-stage 70S ribosome quality control and in maturation of the 3' terminus of the 16S rRNA. The chain is Endoribonuclease YbeY from Wolbachia pipientis subsp. Culex pipiens (strain wPip).